The chain runs to 244 residues: 1-(5-phosphoribosyl)-5-[(5-phosphoribosylamino)methylideneamino] imidazole-4-carboxamide isomerase (244 aa).

D10 serves as the catalytic Proton acceptor. D129 serves as the catalytic Proton donor.

It belongs to the HisA/HisF family.

The protein resides in the cytoplasm. It carries out the reaction 1-(5-phospho-beta-D-ribosyl)-5-[(5-phospho-beta-D-ribosylamino)methylideneamino]imidazole-4-carboxamide = 5-[(5-phospho-1-deoxy-D-ribulos-1-ylimino)methylamino]-1-(5-phospho-beta-D-ribosyl)imidazole-4-carboxamide. Its pathway is amino-acid biosynthesis; L-histidine biosynthesis; L-histidine from 5-phospho-alpha-D-ribose 1-diphosphate: step 4/9. The polypeptide is 1-(5-phosphoribosyl)-5-[(5-phosphoribosylamino)methylideneamino] imidazole-4-carboxamide isomerase (Rhodococcus jostii (strain RHA1)).